We begin with the raw amino-acid sequence, 258 residues long: Deoxyribose-phosphate aldolase (258 aa).

The active-site Proton donor/acceptor is the Asp102. Lys165 serves as the catalytic Schiff-base intermediate with acetaldehyde. Lys199 serves as the catalytic Proton donor/acceptor.

Belongs to the DeoC/FbaB aldolase family. DeoC type 2 subfamily.

Its subcellular location is the cytoplasm. The catalysed reaction is 2-deoxy-D-ribose 5-phosphate = D-glyceraldehyde 3-phosphate + acetaldehyde. Its pathway is carbohydrate degradation; 2-deoxy-D-ribose 1-phosphate degradation; D-glyceraldehyde 3-phosphate and acetaldehyde from 2-deoxy-alpha-D-ribose 1-phosphate: step 2/2. In terms of biological role, catalyzes a reversible aldol reaction between acetaldehyde and D-glyceraldehyde 3-phosphate to generate 2-deoxy-D-ribose 5-phosphate. This Vibrio parahaemolyticus serotype O3:K6 (strain RIMD 2210633) protein is Deoxyribose-phosphate aldolase.